A 643-amino-acid polypeptide reads, in one-letter code: MWSIVTDPIKDLISKVVKNSIHPDFHDAVSKMTIIDAFLFFIVHSIDKLGIWHRLPVFFGLLYLAIRRHLHQEYNLLNVGTTPVGIRSNPSDFPYRTADGRYNDPFNDGAGSQGSFFGRNILPVDQKNKLLKPDPMVVVTKLLERKTYKDTGTQFNVIAASWIQFMIHDWIDHMEDTKQVELSAPSEVASQCPLKSFKFFKTKEIPTGFYDIKTGHANVRTPWWDGSVVYGSNEQVLNKVRTFKDGKLKISKEGHLLHNEDGTAISGDIRNSWAGVTTLQTLFVQEHNAVCDALKKENSDLEDEDLYRHARLVTSAVIAKIHTIDWTVELLKTDTLLAGMRANWYGLLGKQFKDRFGHVGNSILSGFVGMKRSENHGVPYSLTEEFATVYRMHPLLPDSLHLRDISASPGPNKSPPLIKEIPMNDLIGLQGEKTLLEIGNAKKLVSMGHQACGALELWNYPSWLRNLVPHNIDGTERSDHVDLAALEVYRDRERNVARYNQFRRGLLLIPISKWEDLTDDEEAIKVLEEVYGDDVEELDVLVGLMAEKKIKGFAISETAFVIFLLMASRRLEADRFFTSNFNEETYTKKGLEWVNTTESLKDVIDRHHPEMTHKWLNSSSAFSVWDTSPNKHNHIPIYFRVPN.

The Proton acceptor role is filled by histidine 168. Aspartate 169 serves as a coordination point for Ca(2+). Histidine 173 is a heme b binding site. Positions 221, 223, 225, and 227 each coordinate Ca(2+). Residues histidine 393, arginine 490, and arginine 494 each contribute to the heme b site.

It belongs to the peroxidase family. Heme b serves as cofactor. It depends on Ca(2+) as a cofactor.

It catalyses the reaction hexadecanoate + O2 = (2R)-2-hydroperoxyhexadecanoate. The enzyme catalyses dodecanoate + O2 = (2R)-2-hydroperoxydodecanoate. Functionally, alpha-dioxygenase that catalyzes the primary oxygenation step of a variety of 14-20 carbon fatty acids, containing up to three unsaturated bonds, into their corresponding 2R-hydroperoxides. Involved in the production of oxylipins that function in cell signaling, wound healing, and protection from infection. The alpha-oxidation pathway of fatty acids may play a role during plant developmental processes. The chain is Alpha-dioxygenase PIOX from Pisum sativum (Garden pea).